The sequence spans 123 residues: Small ribosomal subunit protein uS12 (123 aa).

The residue at position 89 (D89) is a 3-methylthioaspartic acid.

This sequence belongs to the universal ribosomal protein uS12 family. Part of the 30S ribosomal subunit. Contacts proteins S8 and S17. May interact with IF1 in the 30S initiation complex.

With S4 and S5 plays an important role in translational accuracy. Its function is as follows. Interacts with and stabilizes bases of the 16S rRNA that are involved in tRNA selection in the A site and with the mRNA backbone. Located at the interface of the 30S and 50S subunits, it traverses the body of the 30S subunit contacting proteins on the other side and probably holding the rRNA structure together. The combined cluster of proteins S8, S12 and S17 appears to hold together the shoulder and platform of the 30S subunit. This is Small ribosomal subunit protein uS12 from Syntrophobacter fumaroxidans (strain DSM 10017 / MPOB).